The sequence spans 171 residues: 3-hydroxydecanoyl-[acyl-carrier-protein] dehydratase (171 aa).

The active site involves His70.

It belongs to the thioester dehydratase family. FabA subfamily. In terms of assembly, homodimer.

The protein localises to the cytoplasm. The enzyme catalyses a (3R)-hydroxyacyl-[ACP] = a (2E)-enoyl-[ACP] + H2O. It carries out the reaction (3R)-hydroxydecanoyl-[ACP] = (2E)-decenoyl-[ACP] + H2O. It catalyses the reaction (2E)-decenoyl-[ACP] = (3Z)-decenoyl-[ACP]. Its pathway is lipid metabolism; fatty acid biosynthesis. Its function is as follows. Necessary for the introduction of cis unsaturation into fatty acids. Catalyzes the dehydration of (3R)-3-hydroxydecanoyl-ACP to E-(2)-decenoyl-ACP and then its isomerization to Z-(3)-decenoyl-ACP. Can catalyze the dehydratase reaction for beta-hydroxyacyl-ACPs with saturated chain lengths up to 16:0, being most active on intermediate chain length. In Chromohalobacter salexigens (strain ATCC BAA-138 / DSM 3043 / CIP 106854 / NCIMB 13768 / 1H11), this protein is 3-hydroxydecanoyl-[acyl-carrier-protein] dehydratase.